Here is a 257-residue protein sequence, read N- to C-terminus: Protein THYLAKOID ASSEMBLY 8-like, chloroplastic (257 aa).

The transit peptide at 1-55 (MTAIRVCSRKFPTFASIFFQNITRNPSIHRISFSNLKPKTLLHPIPPKPFTVFVS) directs the protein to the chloroplast. PPR repeat units lie at residues 142–176 (DVFM…NLFP) and 177–211 (DSQT…PDPP).

This sequence belongs to the PPR family. P subfamily.

The protein localises to the plastid. It localises to the chloroplast. Its function is as follows. Binds weakly to specific single strand RNA (ssRNA). This chain is Protein THYLAKOID ASSEMBLY 8-like, chloroplastic, found in Arabidopsis thaliana (Mouse-ear cress).